The primary structure comprises 36 residues: Photosystem I reaction center subunit VIII (36 aa).

Residues 9-29 (ILTPVVTLVFPGLMFALFFVL) traverse the membrane as a helical segment.

This sequence belongs to the PsaI family.

It localises to the plastid. The protein resides in the chloroplast thylakoid membrane. In terms of biological role, may help in the organization of the PsaL subunit. The polypeptide is Photosystem I reaction center subunit VIII (Emiliania huxleyi (Coccolithophore)).